The following is a 131-amino-acid chain: Holo-[acyl-carrier-protein] synthase (131 aa).

The Mg(2+) site is built by Asp6 and Glu55.

The protein belongs to the P-Pant transferase superfamily. AcpS family. Mg(2+) serves as cofactor.

It localises to the cytoplasm. The enzyme catalyses apo-[ACP] + CoA = holo-[ACP] + adenosine 3',5'-bisphosphate + H(+). Transfers the 4'-phosphopantetheine moiety from coenzyme A to a Ser of acyl-carrier-protein. The chain is Holo-[acyl-carrier-protein] synthase from Verminephrobacter eiseniae (strain EF01-2).